The chain runs to 233 residues: Orotidine 5'-phosphate decarboxylase (233 aa).

Substrate is bound by residues Asp9, Lys31, 58–67 (DLKLHDIPNT), Thr120, Arg182, Gln191, Gly211, and Arg212. Lys60 (proton donor) is an active-site residue.

The protein belongs to the OMP decarboxylase family. Type 1 subfamily. In terms of assembly, homodimer.

The enzyme catalyses orotidine 5'-phosphate + H(+) = UMP + CO2. It participates in pyrimidine metabolism; UMP biosynthesis via de novo pathway; UMP from orotate: step 2/2. Its function is as follows. Catalyzes the decarboxylation of orotidine 5'-monophosphate (OMP) to uridine 5'-monophosphate (UMP). This chain is Orotidine 5'-phosphate decarboxylase, found in Listeria monocytogenes serovar 1/2a (strain ATCC BAA-679 / EGD-e).